We begin with the raw amino-acid sequence, 265 residues long: Pro-opiomelanocortin (265 aa).

Positions Met1–Gly26 are cleaved as a signal peptide. 2 disulfide bridges follow: Cys28-Cys50 and Cys34-Cys46. Thr71 carries O-linked (GalNAc...) threonine glycosylation. Phe87 is modified (phenylalanine amide). The segment at Arg89–Phe138 is disordered. Asn91 carries an N-linked (GlcNAc...) asparagine glycan. Positions Glu106–Asp129 are excised as a propeptide. The span at Arg118–Phe138 shows a compositional bias: basic and acidic residues. At Ser132 the chain carries N-acetylserine; in Corticotropin. Val144 carries the post-translational modification Valine amide. Ser162 carries the phosphoserine modification. Pyrrolidone carboxylic acid (Glu); partial is present on Glu173. Tyr200 carries the post-translational modification Sulfotyrosine. Residues Glu209–Thr240 are disordered. A compositionally biased stretch (basic and acidic residues) spans Ala210–Tyr235.

The protein belongs to the POMC family. Post-translationally, specific enzymatic cleavages at paired basic residues yield the different active peptides. As to expression, ACTH and MSH are produced by the pituitary gland.

The protein resides in the secreted. In terms of biological role, stimulates the adrenal glands to release cortisol. Its function is as follows. Anorexigenic peptide. Increases the pigmentation of skin by increasing melanin production in melanocytes. Endogenous orexigenic opiate. Functionally, endogenous opiate. In Bos taurus (Bovine), this protein is Pro-opiomelanocortin (POMC).